Reading from the N-terminus, the 329-residue chain is MTRTPVNVTVTGAAGQIGYALLFRIASGHLLGPDVPVNLRLLEIPQGLKAAEGTAMELDDCAFPLLRGIEITDDPNVGFAGANVALLVGARPRTKGMERGDLLAANGGIFKPQGKAINDHAADDIKVLVVGNPANTNALIAQAAAPDVPAERFTAMTRLDHNRAISQLAAKTGAAVSDIKKLTIWGNHSATQYPDIFHAEIAGKNAAETVNDEVWLADTFIPTVAKRGAAIIEARGASSAASAANAAIDHVHTWVNGTAEGDWTSMGIPSDGSYGVPEGIISSFPVTTKDGKYEIVQGLDINEFSRTRIDASVKELTEERDAVRELGLI.

An NAD(+)-binding site is contributed by 12 to 18; that stretch reads GAAGQIG. Residues Arg-93 and Arg-99 each coordinate substrate. Residues Asn-106, Gln-113, and 130-132 each bind NAD(+); that span reads VGN. Substrate-binding residues include Asn-132 and Arg-163. Catalysis depends on His-188, which acts as the Proton acceptor.

Belongs to the LDH/MDH superfamily. MDH type 2 family.

The enzyme catalyses (S)-malate + NAD(+) = oxaloacetate + NADH + H(+). In terms of biological role, catalyzes the reversible oxidation of malate to oxaloacetate. The polypeptide is Malate dehydrogenase (Streptomyces griseus subsp. griseus (strain JCM 4626 / CBS 651.72 / NBRC 13350 / KCC S-0626 / ISP 5235)).